A 254-amino-acid polypeptide reads, in one-letter code: 5-oxoprolinase subunit A (254 aa).

It belongs to the LamB/PxpA family. As to quaternary structure, forms a complex composed of PxpA, PxpB and PxpC.

It carries out the reaction 5-oxo-L-proline + ATP + 2 H2O = L-glutamate + ADP + phosphate + H(+). Catalyzes the cleavage of 5-oxoproline to form L-glutamate coupled to the hydrolysis of ATP to ADP and inorganic phosphate. The protein is 5-oxoprolinase subunit A of Burkholderia vietnamiensis (strain G4 / LMG 22486) (Burkholderia cepacia (strain R1808)).